The following is a 278-amino-acid chain: Large ribosomal subunit protein uL2 (278 aa).

2 disordered regions span residues 32–57 (ALTE…IGGG) and 221–278 (RGVA…KKKR). The segment covering 269-278 (IRSRHAKKKR) has biased composition (basic residues).

Belongs to the universal ribosomal protein uL2 family. In terms of assembly, part of the 50S ribosomal subunit. Forms a bridge to the 30S subunit in the 70S ribosome.

Its function is as follows. One of the primary rRNA binding proteins. Required for association of the 30S and 50S subunits to form the 70S ribosome, for tRNA binding and peptide bond formation. It has been suggested to have peptidyltransferase activity; this is somewhat controversial. Makes several contacts with the 16S rRNA in the 70S ribosome. In Zymomonas mobilis subsp. mobilis (strain ATCC 31821 / ZM4 / CP4), this protein is Large ribosomal subunit protein uL2.